The following is a 160-amino-acid chain: SsrA-binding protein (160 aa).

It belongs to the SmpB family.

It localises to the cytoplasm. In terms of biological role, required for rescue of stalled ribosomes mediated by trans-translation. Binds to transfer-messenger RNA (tmRNA), required for stable association of tmRNA with ribosomes. tmRNA and SmpB together mimic tRNA shape, replacing the anticodon stem-loop with SmpB. tmRNA is encoded by the ssrA gene; the 2 termini fold to resemble tRNA(Ala) and it encodes a 'tag peptide', a short internal open reading frame. During trans-translation Ala-aminoacylated tmRNA acts like a tRNA, entering the A-site of stalled ribosomes, displacing the stalled mRNA. The ribosome then switches to translate the ORF on the tmRNA; the nascent peptide is terminated with the 'tag peptide' encoded by the tmRNA and targeted for degradation. The ribosome is freed to recommence translation, which seems to be the essential function of trans-translation. This chain is SsrA-binding protein, found in Pectobacterium atrosepticum (strain SCRI 1043 / ATCC BAA-672) (Erwinia carotovora subsp. atroseptica).